Reading from the N-terminus, the 298-residue chain is GTPase Era (298 aa).

The Era-type G domain occupies 3-170 (KSGFVAILGR…IKLLTDNLEE (168 aa)). Residues 11-18 (GRPNVGKS) are G1. 11 to 18 (GRPNVGKS) provides a ligand contact to GTP. The tract at residues 37–41 (QTTRN) is G2. Residues 58–61 (DTPG) are G3. GTP-binding positions include 58-62 (DTPGI) and 120-123 (NKID). The G4 stretch occupies residues 120 to 123 (NKID). A G5 region spans residues 149–151 (ISA). A KH type-2 domain is found at 201-279 (TQQEVPHSVA…YLETWVKVKK (79 aa)).

Belongs to the TRAFAC class TrmE-Era-EngA-EngB-Septin-like GTPase superfamily. Era GTPase family. As to quaternary structure, monomer.

It localises to the cytoplasm. The protein resides in the cell membrane. An essential GTPase that binds both GDP and GTP, with rapid nucleotide exchange. Plays a role in 16S rRNA processing and 30S ribosomal subunit biogenesis and possibly also in cell cycle regulation and energy metabolism. The protein is GTPase Era of Streptococcus pyogenes serotype M4 (strain MGAS10750).